Here is a 245-residue protein sequence, read N- to C-terminus: MNAFTLYPAIDMRNGKCVRLIQGDYGKETIYGDSPLDMAAQFAQEGAEWIHLVDLDGAKAGRKVNDRHVLDIARQLDAKVEIGGGIRSEADVYGYLSQGVDRVILGSSAVSDPAFVKSMLKQYGGKIAIGLDARNGYVSTEGWLETSSVRAADLGRELAAEGAETFIFTDIATDGMLSGPNIESTVQLAKATGKTVIASGGVSSVADLKALARFKDAGVSGAIIGKALYTKQFTLAEALSGVKDA.

Asp11 acts as the Proton acceptor in catalysis. The active-site Proton donor is Asp132.

This sequence belongs to the HisA/HisF family.

The protein resides in the cytoplasm. It catalyses the reaction 1-(5-phospho-beta-D-ribosyl)-5-[(5-phospho-beta-D-ribosylamino)methylideneamino]imidazole-4-carboxamide = 5-[(5-phospho-1-deoxy-D-ribulos-1-ylimino)methylamino]-1-(5-phospho-beta-D-ribosyl)imidazole-4-carboxamide. It participates in amino-acid biosynthesis; L-histidine biosynthesis; L-histidine from 5-phospho-alpha-D-ribose 1-diphosphate: step 4/9. The sequence is that of 1-(5-phosphoribosyl)-5-[(5-phosphoribosylamino)methylideneamino] imidazole-4-carboxamide isomerase from Bacillus velezensis (strain DSM 23117 / BGSC 10A6 / LMG 26770 / FZB42) (Bacillus amyloliquefaciens subsp. plantarum).